We begin with the raw amino-acid sequence, 335 residues long: Glucokinase (335 aa).

Residue 11–16 participates in ATP binding; that stretch reads ADIGGT.

This sequence belongs to the bacterial glucokinase family.

It localises to the cytoplasm. It catalyses the reaction D-glucose + ATP = D-glucose 6-phosphate + ADP + H(+). This is Glucokinase from Stenotrophomonas maltophilia (strain R551-3).